A 142-amino-acid chain; its full sequence is MVRALAQGTFDLLHPGHIHYLEEAARMGDELYVIVARSANVTHKRAPVLDGRQRRDMIGALEVVDHALLGHESDIFVPIEEIDPDVIVLGHDQHHDEAAIERALGDRGIDCGVRRASPRDPAYDGELLSTGRIVDRICERRC.

Residues 9–10 (TF), 14–17 (HPGH), and Asp92 each bind ATP.

This sequence belongs to the archaeal FAD synthase family. Homodimer. It depends on a divalent metal cation as a cofactor.

The enzyme catalyses FMN + ATP + H(+) = FAD + diphosphate. It participates in cofactor biosynthesis; FAD biosynthesis; FAD from FMN: step 1/1. Catalyzes the transfer of the AMP portion of ATP to flavin mononucleotide (FMN) to produce flavin adenine dinucleotide (FAD) coenzyme. The polypeptide is FAD synthase (Halalkalicoccus jeotgali (strain DSM 18796 / CECT 7217 / JCM 14584 / KCTC 4019 / B3)).